The sequence spans 138 residues: FUN14 domain-containing protein fndc-1 (138 aa).

Transmembrane regions (helical) follow at residues 37–56 (PMVQ…YFVT) and 61–78 (LVAA…FAIH). 2 N-linked (GlcNAc...) asparagine glycosylation sites follow: Asn85 and Asn111.

It belongs to the FUN14 family. As to expression, broadly expressed in somatic tissues. Expressed in the hermaphrodite spermatheca and male gonad. Expressed in spermatids, but not expressed in oocytes.

The protein localises to the mitochondrion outer membrane. Its function is as follows. Mitophagy receptor which plays a role in paternal mitochondria degradation in embryos after the two-cell stage. This chain is FUN14 domain-containing protein fndc-1, found in Caenorhabditis elegans.